Reading from the N-terminus, the 179-residue chain is ECF RNA polymerase sigma factor SigF (179 aa).

Residues 33 to 93 (RLRAYFMRRM…KLIDHWRRRK (61 aa)) are sigma-70 factor domain-2. The Polymerase core binding signature appears at 51 to 64 (DLVQETLLAVHLKR). A sigma-70 factor domain-4 region spans residues 123–170 (ALASLPQRQRMLVSDVKLTGLSLAEAGARAGISEGAAKVALHRALKAL). A DNA-binding region (H-T-H motif) is located at residues 145-164 (LAEAGARAGISEGAAKVALH).

The protein belongs to the sigma-70 factor family. ECF subfamily.

Its subcellular location is the cytoplasm. Its function is as follows. Sigma factors are initiation factors that promote the attachment of RNA polymerase to specific initiation sites and are then released. Extracytoplasmic function (ECF) sigma factors are held in an inactive form by a cognate anti-sigma factor (NrsF in this case) until they are released. Up-regulates expression of 4 operons (sigF-nrsF, CCNA_02834, CCNA_03001 to CCNA_02999 and CCNA_03363 to CCNA_03366) in response to potassium dichromate (K(2)Cr(2)O(7)) or cadmium chloride (CdCl(2)). Overexpression of sigF leads to higher expression of its regulon. The protein is ECF RNA polymerase sigma factor SigF of Caulobacter vibrioides (strain NA1000 / CB15N) (Caulobacter crescentus).